Consider the following 343-residue polypeptide: Small ribosomal subunit biogenesis GTPase RsgA (343 aa).

Residues 116–275 enclose the CP-type G domain; that stretch reads RGQLKPVAAN…LIDSPGIREF (160 aa). GTP contacts are provided by residues 163–166 and 217–225; these read NKAD and GQSGVGKSS. 4 residues coordinate Zn(2+): Cys299, Cys304, His306, and Cys312.

It belongs to the TRAFAC class YlqF/YawG GTPase family. RsgA subfamily. Monomer. Associates with 30S ribosomal subunit, binds 16S rRNA. Requires Zn(2+) as cofactor.

The protein localises to the cytoplasm. One of several proteins that assist in the late maturation steps of the functional core of the 30S ribosomal subunit. Helps release RbfA from mature subunits. May play a role in the assembly of ribosomal proteins into the subunit. Circularly permuted GTPase that catalyzes slow GTP hydrolysis, GTPase activity is stimulated by the 30S ribosomal subunit. The polypeptide is Small ribosomal subunit biogenesis GTPase RsgA (Pseudomonas syringae pv. tomato (strain ATCC BAA-871 / DC3000)).